A 608-amino-acid chain; its full sequence is 2',5'-phosphodiesterase 12 (608 aa).

The N-terminal 16 residues, 1 to 16 (MWRLPGRAALRGVRSV), are a transit peptide targeting the mitochondrion. Positions 91-111 (AKKSRKNRAHSSGGAACAATG) are disordered. Positions 100–111 (HSSGGAACAATG) are enriched in low complexity. Ser-216 carries the phosphoserine modification. The Mg(2+) site is built by Glu-350, Asp-495, and Asn-497. Asp-495 serves as the catalytic Proton donor/acceptor.

The protein belongs to the CCR4/nocturin family. Mg(2+) serves as cofactor.

It localises to the mitochondrion matrix. The enzyme catalyses Exonucleolytic cleavage of poly(A) to 5'-AMP.. Its function is as follows. Enzyme that cleaves 2',5'-phosphodiester bond linking adenosines of the 5'-triphosphorylated oligoadenylates, triphosphorylated oligoadenylates referred as 2-5A modulates the 2-5A system. Degrades triphosphorylated 2-5A to produce AMP and ATP. Also cleaves 3',5'-phosphodiester bond of oligoadenylates. Plays a role as a negative regulator of the 2-5A system that is one of the major pathways for antiviral and antitumor functions induced by interferons (IFNs). Suppression of this enzyme increases cellular 2-5A levels and decreases viral replication in cultured small-airway epithelial cells. The chain is 2',5'-phosphodiesterase 12 (Pde12) from Rattus norvegicus (Rat).